The chain runs to 243 residues: Nuclear protein UL4 homolog (243 aa).

Positions 193–226 (RPDDQTTPTPTPHQYTSQRRQPETNCPSPQPAFF) are disordered. Polar residues predominate over residues 205-219 (HQYTSQRRQPETNCP).

This sequence belongs to the alphaherpesvirinae HHV-1 UL4 family.

The protein localises to the host nucleus. The polypeptide is Nuclear protein UL4 homolog (Varicella-zoster virus (strain Oka vaccine) (HHV-3)).